A 344-amino-acid chain; its full sequence is Dihydroorotase (344 aa).

Zn(2+)-binding residues include histidine 13 and histidine 15. Substrate-binding positions include 15-17 (HLR) and asparagine 41. Zn(2+) is bound by residues lysine 99, histidine 136, and histidine 174. N6-carboxylysine is present on lysine 99. Residue histidine 136 participates in substrate binding. Leucine 219 serves as a coordination point for substrate. Zn(2+) is bound at residue aspartate 247. Aspartate 247 is an active-site residue. Substrate contacts are provided by histidine 251 and alanine 263.

The protein belongs to the metallo-dependent hydrolases superfamily. DHOase family. Class II DHOase subfamily. In terms of assembly, homodimer. Zn(2+) serves as cofactor.

The catalysed reaction is (S)-dihydroorotate + H2O = N-carbamoyl-L-aspartate + H(+). Its pathway is pyrimidine metabolism; UMP biosynthesis via de novo pathway; (S)-dihydroorotate from bicarbonate: step 3/3. In terms of biological role, catalyzes the reversible cyclization of carbamoyl aspartate to dihydroorotate. This is Dihydroorotase from Shewanella denitrificans (strain OS217 / ATCC BAA-1090 / DSM 15013).